The chain runs to 826 residues: Dolichyl-diphosphooligosaccharide--protein glycosyltransferase subunit STT3B (826 aa).

The segment at 1 to 60 is disordered; that stretch reads MAEPSAPESKHKSSLNSSPWSGLMALGNSRHGHHGPGAQCAHKAAGGVAPPKPAPAGLSG. At A2 the chain carries N-acetylalanine. Topologically, residues 2–41 are cytoplasmic; that stretch reads AEPSAPESKHKSSLNSSPWSGLMALGNSRHGHHGPGAQCA. Residues S13, S18, and S29 each carry the phosphoserine modification. A helical transmembrane segment spans residues 42-86; that stretch reads HKAAGGVAPPKPAPAGLSGGLSQPAGWQSLLSFTILFLAWLAGFS. Over 87-173 the chain is Lumenal; it reads SRLFAVIRFE…VHIRDVCVFL (87 aa). The DXD motif 1 motif lies at 101-103; it reads EFD. D103 contacts Mn(2+). The chain crosses the membrane as a helical span at residues 174 to 192; the sequence is APTFSGLTSISTFLLTREL. At 193-194 the chain is on the cytoplasmic side; the sequence is WN. The helical transmembrane segment at 195–212 threads the bilayer; it reads QGAGLLAACFIAIVPGYI. The Lumenal portion of the chain corresponds to 213–223; sequence SRSVAGSFDNE. Positions 221 and 223 each coordinate Mn(2+). The short motif at 221 to 223 is the DXD motif 2 element; sequence DNE. The chain crosses the membrane as a helical span at residues 224-243; the sequence is GIAIFALQFTYYLWVKSVKT. Over 244-245 the chain is Cytoplasmic; the sequence is GS. A helical membrane pass occupies residues 246–260; sequence VFWTMCCCLSYFYMV. The Lumenal portion of the chain corresponds to 261–265; it reads SAWGG. The helical transmembrane segment at 266-282 threads the bilayer; that stretch reads YVFIINLIPLHVFVLLL. Topologically, residues 283-287 are cytoplasmic; the sequence is MQRYS. A helical membrane pass occupies residues 288–313; it reads KRVYIAYSTFYIVGLILSMQIPFVGF. Residues 314 to 321 are Lumenal-facing; the sequence is QPIRTSEH. The chain crosses the membrane as a helical span at residues 322–341; it reads MAAAGVFALLQAYAFLQYLR. Over 342 to 350 the chain is Cytoplasmic; the sequence is DRLTKQEFQ. A helical membrane pass occupies residues 351-371; that stretch reads TLFFLGVSLAAGAVFLSVIYL. Residues 372 to 410 lie on the Lumenal side of the membrane; sequence TYTGYIAPWSGRFYSLWDTGYAKIHIPIIASVSEHQPTT. The SVSE motif signature appears at 402 to 405; that stretch reads SVSE. A helical membrane pass occupies residues 411-433; the sequence is WVSFFFDLHILVCTFPAGLWFCI. Over 434–439 the chain is Cytoplasmic; sequence KNINDE. A helical transmembrane segment spans residues 440 to 456; sequence RVFVALYAISAVYFAGV. Residues 457–460 lie on the Lumenal side of the membrane; it reads MVRL. R459 contributes to the dolichyl diphosphooligosaccharide binding site. Residues 461–482 form a helical membrane-spanning segment; the sequence is MLTLTPVVCMLSAIAFSNVFEH. The Cytoplasmic segment spans residues 483–526; it reads YLGDDMKRENPPVEDSSDEDDKRNPGNLYDKAGKVRKHVTEQEK. A disordered region spans residues 490 to 512; the sequence is RENPPVEDSSDEDDKRNPGNLYD. Phosphoserine is present on residues S498 and S499. A helical membrane pass occupies residues 527-552; that stretch reads TEEGLGPNIKSIVTMLMLMLLMMFAV. Residues 553–826 are Lumenal-facing; sequence HCTWVTSNAY…KGKKISKKTV (274 aa). An interacts with target acceptor peptide in protein substrate region spans residues 604-606; that stretch reads WWD. A WWDYG motif motif is present at residues 604 to 608; it reads WWDYG. A dolichyl diphosphooligosaccharide-binding site is contributed by Y609. N-linked (GlcNAc...) asparagine glycans are attached at residues N616 and N623. N627 carries N-linked (GlcNAc...) (high mannose) asparagine glycosylation. N641 carries an N-linked (GlcNAc...) asparagine glycan. The DK motif signature appears at 671 to 678; that stretch reads DINKFLWM.

Belongs to the STT3 family. Component of the oligosaccharyltransferase (OST) complex. There are 2 OST complexes, OST-A and OST-B, which contain STT3A or STT3B as catalytic subunit, respectively. OST-A and OST-B contain common core subunits RPN1, RPN2, OST48, OST4, DAD1 and TMEM258, and OST-B contains either MAGT1 or TUSC3 as specific accessory subunit. The cofactor is Mg(2+). Requires Mn(2+) as cofactor.

Its subcellular location is the endoplasmic reticulum. The protein localises to the endoplasmic reticulum membrane. The catalysed reaction is a di-trans,poly-cis-dolichyl diphosphooligosaccharide + L-asparaginyl-[protein] = N(4)-(oligosaccharide-(1-&gt;4)-N-acetyl-beta-D-glucosaminyl-(1-&gt;4)-N-acetyl-beta-D-glucosaminyl)-L-asparaginyl-[protein] + a di-trans,poly-cis-dolichyl diphosphate + H(+). It functions in the pathway protein modification; protein glycosylation. Catalytic subunit of the oligosaccharyl transferase (OST) complex that catalyzes the initial transfer of a defined glycan (Glc(3)Man(9)GlcNAc(2) in eukaryotes) from the lipid carrier dolichol-pyrophosphate to an asparagine residue within an Asn-X-Ser/Thr consensus motif in nascent polypeptide chains, the first step in protein N-glycosylation. N-glycosylation occurs cotranslationally and the complex associates with the Sec61 complex at the channel-forming translocon complex that mediates protein translocation across the endoplasmic reticulum (ER). All subunits are required for a maximal enzyme activity. This subunit contains the active site and the acceptor peptide and donor lipid-linked oligosaccharide (LLO) binding pockets. STT3B is present in a small subset of OST complexes and mediates both cotranslational and post-translational N-glycosylation of target proteins: STT3B-containing complexes are required for efficient post-translational glycosylation and while they are less competent than STT3A-containing complexes for cotranslational glycosylation, they have the ability to mediate glycosylation of some nascent sites that are not accessible for STT3A. STT3B-containing complexes also act post-translationally and mediate modification of skipped glycosylation sites in unfolded proteins. Plays a role in ER-associated degradation (ERAD) pathway that mediates ubiquitin-dependent degradation of misfolded endoplasmic reticulum proteins by mediating N-glycosylation of unfolded proteins, which are then recognized by the ERAD pathway and targeted for degradation. The sequence is that of Dolichyl-diphosphooligosaccharide--protein glycosyltransferase subunit STT3B from Canis lupus familiaris (Dog).